A 119-amino-acid chain; its full sequence is Putative mating-type protein A2 (119 aa).

The segment at residues 38 to 100 (KPYRGHRFTK…NRRRKEKTIT (63 aa)) is a DNA-binding region (homeobox; TALE-type).

This sequence belongs to the TALE/M-ATYP homeobox family.

It is found in the nucleus. Its function is as follows. Probably not a functional protein. Cells lacking A2 show no obvious alterations in mating, sporulation and cell growth. This Saccharomyces cerevisiae (Baker's yeast) protein is Putative mating-type protein A2 (MATA2).